Reading from the N-terminus, the 508-residue chain is Photosystem II CP47 reaction center protein (508 aa).

The next 6 helical transmembrane spans lie at serine 21–serine 36, isoleucine 101–tryptophan 115, glycine 140–phenylalanine 156, isoleucine 203–serine 218, valine 237–valine 252, and serine 457–arginine 472.

It belongs to the PsbB/PsbC family. PsbB subfamily. In terms of assembly, PSII is composed of 1 copy each of membrane proteins PsbA, PsbB, PsbC, PsbD, PsbE, PsbF, PsbH, PsbI, PsbJ, PsbK, PsbL, PsbM, PsbT, PsbX, PsbY, PsbZ, Psb30/Ycf12, at least 3 peripheral proteins of the oxygen-evolving complex and a large number of cofactors. It forms dimeric complexes. It depends on Binds multiple chlorophylls. PSII binds additional chlorophylls, carotenoids and specific lipids. as a cofactor.

It localises to the plastid. The protein resides in the chloroplast thylakoid membrane. In terms of biological role, one of the components of the core complex of photosystem II (PSII). It binds chlorophyll and helps catalyze the primary light-induced photochemical processes of PSII. PSII is a light-driven water:plastoquinone oxidoreductase, using light energy to abstract electrons from H(2)O, generating O(2) and a proton gradient subsequently used for ATP formation. This is Photosystem II CP47 reaction center protein from Barbarea verna (Land cress).